The chain runs to 308 residues: Bifunctional protein FolD (308 aa).

NADP(+) contacts are provided by residues 171-173, Ser198, and Ile239; that span reads GRS.

The protein belongs to the tetrahydrofolate dehydrogenase/cyclohydrolase family. As to quaternary structure, homodimer.

The catalysed reaction is (6R)-5,10-methylene-5,6,7,8-tetrahydrofolate + NADP(+) = (6R)-5,10-methenyltetrahydrofolate + NADPH. It carries out the reaction (6R)-5,10-methenyltetrahydrofolate + H2O = (6R)-10-formyltetrahydrofolate + H(+). It functions in the pathway one-carbon metabolism; tetrahydrofolate interconversion. In terms of biological role, catalyzes the oxidation of 5,10-methylenetetrahydrofolate to 5,10-methenyltetrahydrofolate and then the hydrolysis of 5,10-methenyltetrahydrofolate to 10-formyltetrahydrofolate. This Borreliella burgdorferi (strain ZS7) (Borrelia burgdorferi) protein is Bifunctional protein FolD.